We begin with the raw amino-acid sequence, 417 residues long: Serine hydroxymethyltransferase (417 aa).

(6S)-5,6,7,8-tetrahydrofolate is bound by residues Leu-112 and 116–118 (GHL). At Lys-221 the chain carries N6-(pyridoxal phosphate)lysine. Glu-247 serves as a coordination point for (6S)-5,6,7,8-tetrahydrofolate.

Belongs to the SHMT family. As to quaternary structure, homodimer. Pyridoxal 5'-phosphate serves as cofactor.

It is found in the cytoplasm. It carries out the reaction (6R)-5,10-methylene-5,6,7,8-tetrahydrofolate + glycine + H2O = (6S)-5,6,7,8-tetrahydrofolate + L-serine. It participates in one-carbon metabolism; tetrahydrofolate interconversion. It functions in the pathway amino-acid biosynthesis; glycine biosynthesis; glycine from L-serine: step 1/1. Catalyzes the reversible interconversion of serine and glycine with tetrahydrofolate (THF) serving as the one-carbon carrier. This reaction serves as the major source of one-carbon groups required for the biosynthesis of purines, thymidylate, methionine, and other important biomolecules. Also exhibits THF-independent aldolase activity toward beta-hydroxyamino acids, producing glycine and aldehydes, via a retro-aldol mechanism. The polypeptide is Serine hydroxymethyltransferase (Borreliella burgdorferi (strain ATCC 35210 / DSM 4680 / CIP 102532 / B31) (Borrelia burgdorferi)).